The primary structure comprises 326 residues: Glyoxylate/hydroxypyruvate reductase B (326 aa).

Residues R237 and E266 contribute to the active site. Catalysis depends on H285, which acts as the Proton donor.

The protein belongs to the D-isomer specific 2-hydroxyacid dehydrogenase family. GhrB subfamily. Homodimer.

Its subcellular location is the cytoplasm. The enzyme catalyses glycolate + NADP(+) = glyoxylate + NADPH + H(+). It catalyses the reaction (R)-glycerate + NAD(+) = 3-hydroxypyruvate + NADH + H(+). The catalysed reaction is (R)-glycerate + NADP(+) = 3-hydroxypyruvate + NADPH + H(+). Functionally, catalyzes the NADPH-dependent reduction of glyoxylate and hydroxypyruvate into glycolate and glycerate, respectively. This Yersinia enterocolitica serotype O:8 / biotype 1B (strain NCTC 13174 / 8081) protein is Glyoxylate/hydroxypyruvate reductase B.